A 523-amino-acid polypeptide reads, in one-letter code: DNA-(apurinic or apyrimidinic site) endonuclease 2 (523 aa).

Position 42 (E42) interacts with Mg(2+). The active site involves Y151. Mg(2+) contacts are provided by D191, N193, and D294. The active-site Proton donor/acceptor is D191. Residues 348–392 (MKKNKNNSPTQSENVSASASSGSSPTVSRANSVIDVDAYPPEKRR) form a disordered region. Residues 353–362 (NNSPTQSENV) are compositionally biased toward polar residues. 4 residues coordinate Zn(2+): C458, H461, C484, and C508. The segment at 458–517 (CEGHKEPCKYLTVRKPGINYGRKFWICARPVGELIKNSNAVSEEDTQPFQCRFFIWDSDW) adopts a GRF-type zinc-finger fold.

This sequence belongs to the DNA repair enzymes AP/ExoA family. Requires Mg(2+) as cofactor. The cofactor is Mn(2+).

Its subcellular location is the nucleus. It catalyses the reaction Exonucleolytic cleavage in the 3'- to 5'-direction to yield nucleoside 5'-phosphates.. DNA repair enzyme that cleaves apurinic/apyrimidinic (AP) sites and removes 3'-blocking groups present at single strand breaks of damaged DNA. Provides the majority of the AP-endonuclease (APE) activity. Repairs phleomycin D1-induced DNA damage. Plays a role in oxidative damage repair. The sequence is that of DNA-(apurinic or apyrimidinic site) endonuclease 2 (apn2) from Schizosaccharomyces pombe (strain 972 / ATCC 24843) (Fission yeast).